Reading from the N-terminus, the 385-residue chain is Na(+)/H(+) antiporter NhaA (385 aa).

11 helical membrane passes run 9-29 (YSAI…NVLD), 45-65 (IFGL…VFFF), 87-107 (IIPG…YLSV), 114-134 (GWPV…AIFG), 155-175 (AGIV…WIIV), 198-218 (TFLI…SVYQ), 220-235 (GIHA…IMLN), 245-265 (ALEP…AAMV), 282-302 (ILLG…IIAL), 312-332 (FFNL…SLLM), and 345-365 (QGVI…IILM).

The protein belongs to the NhaA Na(+)/H(+) (TC 2.A.33) antiporter family.

The protein localises to the cell membrane. The enzyme catalyses Na(+)(in) + 2 H(+)(out) = Na(+)(out) + 2 H(+)(in). In terms of biological role, na(+)/H(+) antiporter that extrudes sodium in exchange for external protons. This Tropheryma whipplei (strain TW08/27) (Whipple's bacillus) protein is Na(+)/H(+) antiporter NhaA.